Here is a 219-residue protein sequence, read N- to C-terminus: Dual specificity phosphatase 29 (219 aa).

Positions 53 to 201 (HVNEVWPKLY…LRELDRQLVQ (149 aa)) constitute a Tyrosine-protein phosphatase domain. 145 to 152 (HCVMGRSR) is a binding site for substrate. Residue C146 is the Phosphocysteine intermediate of the active site.

Belongs to the protein-tyrosine phosphatase family. Non-receptor class dual specificity subfamily. As to quaternary structure, homodimer. Interacts with PRKAA2.

It localises to the cytoplasm. The protein localises to the nucleus. It catalyses the reaction O-phospho-L-tyrosyl-[protein] + H2O = L-tyrosyl-[protein] + phosphate. The catalysed reaction is O-phospho-L-seryl-[protein] + H2O = L-seryl-[protein] + phosphate. It carries out the reaction O-phospho-L-threonyl-[protein] + H2O = L-threonyl-[protein] + phosphate. Its function is as follows. Dual specificity phosphatase able to dephosphorylate phosphotyrosine, phosphoserine and phosphothreonine residues within the same substrate, with a preference for phosphotyrosine as a substrate. Involved in the modulation of intracellular signaling cascades. May regulate glucose metabolism by activating, AMPK, an energy sensor protein kinase. Affects MAP kinase signaling though modulation of the ERK1/2 cascade in skeletal muscle promoting muscle cell differentiation, development and atrophy. In Bos taurus (Bovine), this protein is Dual specificity phosphatase 29 (DUSP29).